We begin with the raw amino-acid sequence, 1271 residues long: Chitin synthase 4 (1271 aa).

Disordered regions lie at residues methionine 1–histidine 45 and proline 58–serine 117. Residues alanine 21–alanine 30 are compositionally biased toward polar residues. The next 2 helical transmembrane spans lie at tryptophan 165 to leucine 185 and leucine 201 to phenylalanine 221. N-linked (GlcNAc...) asparagine glycosylation is present at asparagine 407. A helical membrane pass occupies residues leucine 473 to leucine 493. 2 N-linked (GlcNAc...) asparagine glycosylation sites follow: asparagine 713 and asparagine 836. Transmembrane regions (helical) follow at residues leucine 867–valine 887, isoleucine 894–isoleucine 914, and phenylalanine 919–leucine 939. Positions histidine 999–proline 1081 are disordered. Positions arginine 1027–glutamate 1037 are enriched in polar residues. 2 N-linked (GlcNAc...) asparagine glycosylation sites follow: asparagine 1055 and asparagine 1161. Positions glutamate 1213–serine 1269 constitute a DEK-C domain.

It belongs to the chitin synthase family.

It localises to the cell membrane. The enzyme catalyses [(1-&gt;4)-N-acetyl-beta-D-glucosaminyl](n) + UDP-N-acetyl-alpha-D-glucosamine = [(1-&gt;4)-N-acetyl-beta-D-glucosaminyl](n+1) + UDP + H(+). In terms of biological role, polymerizes chitin, a structural polymer of the cell wall and septum, by transferring the sugar moiety of UDP-GlcNAc to the non-reducing end of the growing chitin polymer. Produces a large proportion of the chitin that is not deacetylated to chitosan. The chain is Chitin synthase 4 from Cryptococcus neoformans var. grubii serotype A (strain H99 / ATCC 208821 / CBS 10515 / FGSC 9487) (Filobasidiella neoformans var. grubii).